The following is a 325-amino-acid chain: RepFIB replication protein A (325 aa).

Residues 279-298 form a disordered region; that stretch reads APNDESKENPLPPSPAEKVS.

This sequence belongs to the initiator RepB protein family.

In terms of biological role, this protein is essential for plasmid replication; it is involved in copy control functions. In vitro, binds to the DNA repeat units, BCDD'D'', EFG and HIJ. This chain is RepFIB replication protein A (repA), found in Escherichia coli.